The primary structure comprises 629 residues: Citrate (Re)-synthase (629 aa).

Residues 59–329 (IFITDTTFRD…TNGIDTTVIT (271 aa)) form the Pyruvate carboxyltransferase domain. Residues 497 to 601 (VMQRFIEEYP…GVDIRVEDLV (105 aa)) enclose the Cache domain.

This sequence belongs to the alpha-IPM synthase/homocitrate synthase family. Homotetramer. The cofactor is Co(2+). Requires Mn(2+) as cofactor.

The enzyme catalyses oxaloacetate + acetyl-CoA + H2O = citrate + CoA + H(+). With respect to regulation, inhibited by p-hydroxymercuribenzoate and EDTA. Catalyzes the condensation of the acetyl group of acetyl-CoA with oxaloacetate to form citrate. In Syntrophus aciditrophicus (strain SB), this protein is Citrate (Re)-synthase.